Consider the following 488-residue polypeptide: Type II restriction enzyme HgaI (488 aa).

The enzyme catalyses Endonucleolytic cleavage of DNA to give specific double-stranded fragments with terminal 5'-phosphates.. An S subtype restriction enzyme that recognizes the double-stranded sequences 5'-GACGC-3' and 5'-GCGTC-3' and cleaves respectively 10 bases after G-1 and 10 bases before G'-1. This is Type II restriction enzyme HgaI (hgaIR) from Avibacterium volantium (Pasteurella volantium).